We begin with the raw amino-acid sequence, 340 residues long: UDP-glucose 4-epimerase (340 aa).

Residues 12-13 (FI), 32-37 (DNYGNS), 59-60 (DV), 81-85 (FAGLK), asparagine 100, serine 125, tyrosine 150, lysine 154, and phenylalanine 179 each bind NAD(+). Positions 125 and 150 each coordinate substrate. The active-site Proton acceptor is tyrosine 150. Substrate is bound by residues asparagine 180, 200–201 (NL), 217–219 (QVY), arginine 232, and 292–295 (RPGD).

The protein belongs to the NAD(P)-dependent epimerase/dehydratase family. Homodimer. The cofactor is NAD(+).

It carries out the reaction UDP-alpha-D-glucose = UDP-alpha-D-galactose. The protein operates within carbohydrate metabolism; galactose metabolism. Involved in the metabolism of galactose. Catalyzes the conversion of UDP-galactose (UDP-Gal) to UDP-glucose (UDP-Glc) through a mechanism involving the transient reduction of NAD. Can also epimerize UDP-GalNAc to UDP-GlcNAc. Involved in the lacto-N-biose I/galacto-N-biose (LNB/GNB) degradation pathway, which is important for host intestinal colonization by bifidobacteria. This is UDP-glucose 4-epimerase (lnpD) from Bifidobacterium longum subsp. longum (strain ATCC 15707 / DSM 20219 / JCM 1217 / NCTC 11818 / E194b).